Reading from the N-terminus, the 172-residue chain is Ribosome maturation factor RimM (172 aa).

Positions 96-168 (EGEFYYHQII…RVDVELMEGL (73 aa)) constitute a PRC barrel domain.

It belongs to the RimM family. Binds ribosomal protein uS19.

It localises to the cytoplasm. Functionally, an accessory protein needed during the final step in the assembly of 30S ribosomal subunit, possibly for assembly of the head region. Essential for efficient processing of 16S rRNA. May be needed both before and after RbfA during the maturation of 16S rRNA. It has affinity for free ribosomal 30S subunits but not for 70S ribosomes. This is Ribosome maturation factor RimM from Streptococcus pyogenes serotype M6 (strain ATCC BAA-946 / MGAS10394).